The primary structure comprises 270 residues: Oxidoreductase claK (270 aa).

It belongs to the avfA family.

It participates in pigment biosynthesis. Its function is as follows. Oxidoreductase; part of the gene cluster that mediates the biosynthesis of the bianthraquinone cladofulvin, a conidial pigment not required for virulence but that plays a role in fitness and resistance to environmental stresses including UV light and low-temperature stress. The pathway begins with the synthesis of atrochrysone thioester by the polyketide synthase (PKS) claG. The atrochrysone carboxyl ACP thioesterase claF then breaks the thioester bond and releases the atrochrysone carboxylic acid from claG. This compound is decarboxylated by claH to yield emodin, which is further converted to chrysophanol hydroquinone by the reductase claC and the dehydratase claB. The cytochrome monooxygenase P450 claM then catalyzes the dimerization of nataloe-emodin to cladofulvin. The sequence is that of Oxidoreductase claK from Passalora fulva (Tomato leaf mold).